A 1806-amino-acid chain; its full sequence is MTQGPRYIRHFHDWIAATESPSTSTEMQWTDTMSGMISLPLLTIMQIVQYFQYLETREITHSQFVEEIRIGGAQGYCGGLLPAAAIAASRNEDEVVHNAGIALRLALAIGAYAELGDDENIPGPTTVVLRTKYSGQAEEIVSKFPGTYISAITDPETISIVGPVNVVEELRAYAEGQGIKATKLHLRGKVHNPENKDLCKEFINLCHKYPSMLMLPTAASLQTSLRSNKTGKELRSSATTASLSIEVLENTLANKCEWYNLLNGMAKDLDAISRTEKEHTFALFGTGRKNCVPTMPFEEKQLRISKLDIVTYVEKHDIPREGRTLDQYPENAIAIVGAGCRLPGANSIDELWEILSAGSSRVEKLRSSRFDLSTVSRGSVGPDAKQTAKRELYGNFLDDVESFDSNFFGISPREAMYMDPQQRLLLETAYEALDGSGYLRTHRRGDFDNVGCFIGASYTEYLENTSSYNPTAYTATGTIRAFQSGRISYHFGWSGPSEVIDTACSASLVAVNRACKAIQSGECPMALAGGVNIITGVNNYFDLGKAGFLSTTGQCKPFDETADGYCRADGVGLVALKSLRQAVADGNNVMGVIMGVGTNQGGLSPAITVPYYRAQISLFKNVLNQSGLKSGQISYVEAHGTGTQVGDPIEISSVREVFGGSDRSEFVNMGSLKANVGHSETAAGIGSLMKVLAMLKHGKIPPLAGFKSLNPKIPALEPDYLRIPTELQDWNSSFRAACVNSYGAAGSNSALICGEAPIVTAMTDVLPTDTNMHETSHLQYPLFLSATNNFTLKANASKLAQYVLKNQPRVADVAYTLYHRRKHHRVQWTGLAHDLESLVRSLDKIEEGLEVPASPKSVVLAFSGQSKQTIGLDPSWYVSFPRLRHYIDLCNKIVIRLGYSTILPAVFATDPVEDVVALQCGTFAFQYACAKCWIDSGLEVKAAVGHSFGELTAMAVTETLSLEDALHLVAARATLVQTKWGSERGTMLAIEATLDTTRQIITVVNENIEIACYNGQKSHVLVGTERSIGQVEHLIATDNRFKGTRNTRVKTSHGFHSVFTEPILPELDEIAQKLEFNAPSIPLETSTEKPINEGEHAVEPSRIVQHTRTPVYFGDAISRLEERLGPCIWLEAGSDSPIIPMVKRATHNPSQHTFLGLKAKDIARPIDVIPQASLTLWQEGMSVSCFDGFYSHPPNGVTSNVFNHIWLPPYQFQRTRHWLQYMDLVTEERKTVDERLRSAGAVGTIASQPQTPPLKLVTARSRDSESWSSLEFAIHSETSRFTDIVSAHAVRDQPLCPASMYMECVVMAAQMVEPSVSVKSLSFQNLSFQGALGINYNRDVSLLMEGDGEYLAWNFTVRSTGKESKGRPTTHAKGRFSVTSHIDFQLYERMLADRMNEILVHPQSERLMAGRAYTLFSRVVNYAESLRGISEITILNNRHAVAEVCRPKVSVSSSESTAVAVCDTVTLDTFIQVVGLLINSSETCPVDEVFIATGIDSIIMQDCDFSDPQHDTWKVYAMATTRSESHVAGDMFVFTKDGKLIFTGSGVQFSRFPIAKLEKVLEGIGMNSAPRSPIGNDGIGKGVTAPPSPTTQFHMNGHAKSTPNRHGLRVRTTVEMDEQTLVAQDSVSRRPSALKSAMIRNDSNLGTLGLDSLSKLEFVNQLRAQLGNEISPTQDLSQIADLYNKLFAHSSTTNSRSAHIDHVHKIELDGPSSPTAVNSPVTAGDSQSKLRIRQRILELITENSGESVSTIKDEVSLQDVGIDSLSVIELKESFEDAFSVQFGDWDFGLHLTVRELVDYVVISSNV.

Residues 30 to 191 enclose the Starter acyltransferase (SAT) domain; sequence TDTMSGMISL…TKLHLRGKVH (162 aa). A Ketosynthase family 3 (KS3) domain is found at 330 to 755; the sequence is ENAIAIVGAG…GSNSALICGE (426 aa). Active-site for beta-ketoacyl synthase activity residues include Cys-504, His-639, and His-678. Positions 860-1156 are malonyl-CoA:ACP transacylase (MAT) domain; sequence LAFSGQSKQT…HNPSQHTFLG (297 aa). Residues 862–1147 form the Malonyl-CoA:ACP transacylase (MAT) domain; the sequence is FSGQSKQTIG…IIPMVKRATH (286 aa). Residue Ser-947 is the For acyl/malonyl transferase activity of the active site. The tract at residues 1249 to 1383 is N-terminal hotdog fold; that stretch reads PQTPPLKLVT…GRFSVTSHID (135 aa). Residues 1249–1558 enclose the PKS/mFAS DH domain; sequence PQTPPLKLVT…FSRFPIAKLE (310 aa). The interval 1249–1558 is product template (PT) domain; the sequence is PQTPPLKLVT…FSRFPIAKLE (310 aa). The active-site Proton acceptor; for dehydratase activity is the His-1288. The C-terminal hotdog fold stretch occupies residues 1404-1558; that stretch reads SERLMAGRAY…FSRFPIAKLE (155 aa). Residue Asp-1468 is the Proton donor; for dehydratase activity of the active site. In terms of domain architecture, Carrier spans 1727–1804; sequence QSKLRIRQRI…ELVDYVVISS (78 aa). Position 1764 is an O-(pantetheine 4'-phosphoryl)serine (Ser-1764).

The cofactor is pantetheine 4'-phosphate.

It functions in the pathway secondary metabolite biosynthesis. Its function is as follows. Non-reducing polyketide synthase; part of the gene cluster that mediates the biosynthesis of mitorubrinol and mitorubrinic acid, two virulence factors that improve T.marneffei intracellular survival in macrophages. The two polyketide synthases pks12 and pks11 are probably responsible for sequential use in the biosynthesis of mitorubrinol and mitorubrinic acid. The first part of the biosynthesis is probably catalyzed by pks12, which synthesized orsellinic acid. This tetraketide is then used as a starter unit for pks11, which possesses a SAT domain, in the second part of the biosynthesis. Pks11, contains a methyltransferase domain, also served that methylates the products, using a methyl group from S-adenosylmethionine. The sequence is that of Non-reducing polyketide synthase pks12 from Talaromyces marneffei (Penicillium marneffei).